Reading from the N-terminus, the 2051-residue chain is Autophagy-related protein 2 (2051 aa).

The Chorein N-terminal domain maps to 31-121 (QALDLDNLNF…QDEQTAKNKK (91 aa)). Residues 108–117 (SKQEQDEQTA) are compositionally biased toward basic and acidic residues. Disordered stretches follow at residues 108–129 (SKQE…DGDE), 152–179 (RRLE…DDDG), 297–331 (SLVK…DMSI), 363–384 (DTQY…TPRA), 419–466 (RSEP…ADTE), and 501–564 (PGGW…DTST). 2 stretches are compositionally biased toward polar residues: residues 374 to 383 (AGSSPLSTPR) and 426 to 435 (PPTSFQPQTM). Residues 436 to 454 (PSGAVSPAPSEPSSSASSV) are compositionally biased toward low complexity.

This sequence belongs to the ATG2 family.

Its subcellular location is the preautophagosomal structure membrane. It is found in the endoplasmic reticulum membrane. It carries out the reaction a 1,2-diacyl-sn-glycero-3-phosphocholine(in) = a 1,2-diacyl-sn-glycero-3-phosphocholine(out). It catalyses the reaction a 1,2-diacyl-sn-glycero-3-phospho-L-serine(in) = a 1,2-diacyl-sn-glycero-3-phospho-L-serine(out). The enzyme catalyses a 1,2-diacyl-sn-glycero-3-phosphoethanolamine(in) = a 1,2-diacyl-sn-glycero-3-phosphoethanolamine(out). Its function is as follows. Lipid transfer protein required for autophagosome completion and peroxisome degradation. Tethers the edge of the isolation membrane (IM) to the endoplasmic reticulum (ER) and mediates direct lipid transfer from ER to IM for IM expansion. Atg-2 binds to the ER exit site (ERES), which is the membrane source for autophagosome formation, using basic residues in its N-terminal region (NR) and to the expanding edge of the IM through its C-terminal region. The latter binding is assisted by an atg-18-PtdIns3P interaction. Atg-2 then extracts phospholipids from the membrane source using its NR and transfers them to atg-9 to the IM through its predicted beta-sheet-rich structure for membrane expansion. In Neurospora crassa (strain ATCC 24698 / 74-OR23-1A / CBS 708.71 / DSM 1257 / FGSC 987), this protein is Autophagy-related protein 2 (apg-2).